A 217-amino-acid chain; its full sequence is tRNA (guanine-N(7)-)-methyltransferase (217 aa).

S-adenosyl-L-methionine is bound by residues glutamate 43, aspartate 68, asparagine 101, and asparagine 123. Lysine 127 contacts substrate. The segment at 129–134 is interaction with RNA; that stretch reads RHNKRR. Residues aspartate 159 and 196-199 contribute to the substrate site; that span reads TEYE.

This sequence belongs to the class I-like SAM-binding methyltransferase superfamily. TrmB family.

It catalyses the reaction guanosine(46) in tRNA + S-adenosyl-L-methionine = N(7)-methylguanosine(46) in tRNA + S-adenosyl-L-homocysteine. Its pathway is tRNA modification; N(7)-methylguanine-tRNA biosynthesis. Catalyzes the formation of N(7)-methylguanine at position 46 (m7G46) in tRNA. The sequence is that of tRNA (guanine-N(7)-)-methyltransferase from Clostridium botulinum (strain Loch Maree / Type A3).